Here is a 241-residue protein sequence, read N- to C-terminus: 1-(5-phosphoribosyl)-5-[(5-phosphoribosylamino)methylideneamino] imidazole-4-carboxamide isomerase (241 aa).

Asp-8 serves as the catalytic Proton acceptor. Asp-129 functions as the Proton donor in the catalytic mechanism.

Belongs to the HisA/HisF family.

It localises to the cytoplasm. It carries out the reaction 1-(5-phospho-beta-D-ribosyl)-5-[(5-phospho-beta-D-ribosylamino)methylideneamino]imidazole-4-carboxamide = 5-[(5-phospho-1-deoxy-D-ribulos-1-ylimino)methylamino]-1-(5-phospho-beta-D-ribosyl)imidazole-4-carboxamide. It functions in the pathway amino-acid biosynthesis; L-histidine biosynthesis; L-histidine from 5-phospho-alpha-D-ribose 1-diphosphate: step 4/9. This is 1-(5-phosphoribosyl)-5-[(5-phosphoribosylamino)methylideneamino] imidazole-4-carboxamide isomerase from Novosphingobium aromaticivorans (strain ATCC 700278 / DSM 12444 / CCUG 56034 / CIP 105152 / NBRC 16084 / F199).